A 154-amino-acid chain; its full sequence is Transcriptional repressor NrdR (154 aa).

A zinc finger spans residues 3–34 (CPFCRHPDSRVVDSRETDEGQAIRRRRSCPEC). Positions 46-136 (LAVVKRSGVT…VYRSFESAAD (91 aa)) constitute an ATP-cone domain.

This sequence belongs to the NrdR family. Zn(2+) is required as a cofactor.

In terms of biological role, negatively regulates transcription of bacterial ribonucleotide reductase nrd genes and operons by binding to NrdR-boxes. The sequence is that of Transcriptional repressor NrdR from Mycobacterium sp. (strain JLS).